The chain runs to 295 residues: Ribosomal RNA small subunit methyltransferase A (295 aa).

S-adenosyl-L-methionine-binding residues include asparagine 40, valine 42, glycine 67, glutamate 88, aspartate 118, and asparagine 135.

It belongs to the class I-like SAM-binding methyltransferase superfamily. rRNA adenine N(6)-methyltransferase family. RsmA subfamily.

Its subcellular location is the cytoplasm. It carries out the reaction adenosine(1518)/adenosine(1519) in 16S rRNA + 4 S-adenosyl-L-methionine = N(6)-dimethyladenosine(1518)/N(6)-dimethyladenosine(1519) in 16S rRNA + 4 S-adenosyl-L-homocysteine + 4 H(+). Its function is as follows. Specifically dimethylates two adjacent adenosines (A1518 and A1519) in the loop of a conserved hairpin near the 3'-end of 16S rRNA in the 30S particle. May play a critical role in biogenesis of 30S subunits. The polypeptide is Ribosomal RNA small subunit methyltransferase A (Arthrobacter sp. (strain FB24)).